A 130-amino-acid polypeptide reads, in one-letter code: Calcium-binding protein KRP1 (130 aa).

Residues 72-107 (LTDEDVRCMIKEGDFDCDGALNQMEFCVLMFRLSPD) enclose the EF-hand domain. The Ca(2+) site is built by Asp85, Asp87, Asp89, and Glu96.

In terms of biological role, potential calcium sensor that binds calcium in vitro. The protein is Calcium-binding protein KRP1 of Arabidopsis thaliana (Mouse-ear cress).